Reading from the N-terminus, the 315-residue chain is Type II restriction enzyme SalI (315 aa).

The enzyme catalyses Endonucleolytic cleavage of DNA to give specific double-stranded fragments with terminal 5'-phosphates.. Its function is as follows. A P subtype restriction enzyme that recognizes the double-stranded sequence 5'-GTCGAC-3' and cleaves after G-1. This Streptomyces albus G protein is Type II restriction enzyme SalI.